We begin with the raw amino-acid sequence, 269 residues long: GATA transcription factor 3 (269 aa).

The Nuclear localization signal signature appears at 136–143 (KPRTKRSR). A GATA-type zinc finger spans residues 176–230 (LVFQRRCSHCGTNNTPQWRTGPVGPKTLCNACGVRFKSGRLCPEYRPADSPTFSN). The tract at residues 245-269 (KSKELGEETGEASTKSDPVKFGSKW) is disordered.

Belongs to the type IV zinc-finger family. Class A subfamily. As to expression, mostly expressed in roots. Also expressed in stems, flowers and leaves.

It localises to the nucleus. Functionally, transcriptional activator that specifically binds 5'-GATA-3' or 5'-GAT-3' motifs within gene promoters. May be involved in the regulation of some light-responsive genes. This is GATA transcription factor 3 (GATA3) from Arabidopsis thaliana (Mouse-ear cress).